A 240-amino-acid polypeptide reads, in one-letter code: Coat protein (240 aa).

A compositionally biased stretch (polar residues) spans 1 to 10 (MATPSTQTTD). The segment at 1-27 (MATPSTQTTDPKPANADLSDPNRAPSL) is disordered.

Belongs to the potexvirus capsid protein family.

It localises to the virion. Required for genome encapsidation. Forms ribonucleoprotein complexes along with TGB1 helicase and viral RNA. The chain is Coat protein from Narcissus pseudonarcissus (Daffodil).